We begin with the raw amino-acid sequence, 185 residues long: Ribosome-recycling factor (185 aa).

Belongs to the RRF family.

The protein localises to the cytoplasm. In terms of biological role, responsible for the release of ribosomes from messenger RNA at the termination of protein biosynthesis. May increase the efficiency of translation by recycling ribosomes from one round of translation to another. This chain is Ribosome-recycling factor, found in Pseudomonas fluorescens (strain Pf0-1).